The following is a 1395-amino-acid chain: Autophagy-related protein 11 (1395 aa).

Coiled-coil stretches lie at residues Arg-123 to Lys-172, Leu-246 to Val-277, Asp-555 to Gln-591, Gln-629 to Tyr-818, and Asn-862 to Thr-986. 2 disordered regions span residues Leu-586–Glu-632 and Glu-647–Lys-673. A compositionally biased stretch (polar residues) spans Gly-590–Gly-619. Residues Val-1260–Thr-1395 form a disordered region. Low complexity-rich tracts occupy residues Ser-1292–Arg-1311 and Thr-1337–Thr-1350.

Belongs to the ATG11 family. As to quaternary structure, homodimer.

The protein localises to the preautophagosomal structure membrane. Its subcellular location is the vacuole membrane. Functionally, involved in cytoplasm to vacuole transport (Cvt), pexophagy, mitophagy and nucleophagy. Recruits mitochondria for their selective degradation via autophagy (mitophagy) during starvation. Works as scaffold proteins that recruit ATG proteins to the pre-autophagosome (PAS), the site of vesicle/autophagosome formation. Required for the Cvt vesicles completion. This Pyricularia oryzae (strain 70-15 / ATCC MYA-4617 / FGSC 8958) (Rice blast fungus) protein is Autophagy-related protein 11 (ATG11).